Here is a 337-residue protein sequence, read N- to C-terminus: Holliday junction branch migration complex subunit RuvB (337 aa).

The large ATPase domain (RuvB-L) stretch occupies residues 4–184 (ADRLIEPIAS…FGIVQRLEFY (181 aa)). ATP is bound by residues Ile23, Arg24, Gly65, Lys68, Thr69, Thr70, 131-133 (EDY), Arg174, Tyr184, and Arg221. Position 69 (Thr69) interacts with Mg(2+). The segment at 185–255 (NVADLSTIVS…TAAAALDMLE (71 aa)) is small ATPAse domain (RuvB-S). Residues 258 to 337 (SEGFDIMDRK…FGITKDQTKD (80 aa)) are head domain (RuvB-H). The DNA site is built by Arg294, Arg313, and Arg318.

Belongs to the RuvB family. Homohexamer. Forms an RuvA(8)-RuvB(12)-Holliday junction (HJ) complex. HJ DNA is sandwiched between 2 RuvA tetramers; dsDNA enters through RuvA and exits via RuvB. An RuvB hexamer assembles on each DNA strand where it exits the tetramer. Each RuvB hexamer is contacted by two RuvA subunits (via domain III) on 2 adjacent RuvB subunits; this complex drives branch migration. In the full resolvosome a probable DNA-RuvA(4)-RuvB(12)-RuvC(2) complex forms which resolves the HJ.

The protein resides in the cytoplasm. The catalysed reaction is ATP + H2O = ADP + phosphate + H(+). The RuvA-RuvB-RuvC complex processes Holliday junction (HJ) DNA during genetic recombination and DNA repair, while the RuvA-RuvB complex plays an important role in the rescue of blocked DNA replication forks via replication fork reversal (RFR). RuvA specifically binds to HJ cruciform DNA, conferring on it an open structure. The RuvB hexamer acts as an ATP-dependent pump, pulling dsDNA into and through the RuvAB complex. RuvB forms 2 homohexamers on either side of HJ DNA bound by 1 or 2 RuvA tetramers; 4 subunits per hexamer contact DNA at a time. Coordinated motions by a converter formed by DNA-disengaged RuvB subunits stimulates ATP hydrolysis and nucleotide exchange. Immobilization of the converter enables RuvB to convert the ATP-contained energy into a lever motion, pulling 2 nucleotides of DNA out of the RuvA tetramer per ATP hydrolyzed, thus driving DNA branch migration. The RuvB motors rotate together with the DNA substrate, which together with the progressing nucleotide cycle form the mechanistic basis for DNA recombination by continuous HJ branch migration. Branch migration allows RuvC to scan DNA until it finds its consensus sequence, where it cleaves and resolves cruciform DNA. The protein is Holliday junction branch migration complex subunit RuvB of Colwellia psychrerythraea (strain 34H / ATCC BAA-681) (Vibrio psychroerythus).